A 235-amino-acid polypeptide reads, in one-letter code: NifU-like protein 2, chloroplastic (235 aa).

The N-terminal 16 residues, 1–16 (MQLLTLNPAAISRTPP), are a transit peptide targeting the chloroplast.

The protein belongs to the NifU family. As to quaternary structure, homodimer; disulfide-linked. The cofactor is [2Fe-2S] cluster. Predominantly expressed in leaves and floral stalks. Ubiquitous (at protein level).

Its subcellular location is the plastid. It is found in the chloroplast stroma. In terms of biological role, molecular scaffold for [Fe-S] cluster assembly of chloroplastic iron-sulfur proteins. Required for biogenesis of ferredoxin, a major photosynthetic electron carrier containing [2Fe-2S] cluster. Required for the assembly of photosystem I complex. In Arabidopsis thaliana (Mouse-ear cress), this protein is NifU-like protein 2, chloroplastic (NIFU2).